The sequence spans 106 residues: uncharacterized protein (106 aa).

This is an uncharacterized protein from Archaeoglobus fulgidus (strain ATCC 49558 / DSM 4304 / JCM 9628 / NBRC 100126 / VC-16).